A 319-amino-acid chain; its full sequence is Selection and upkeep of intraepithelial T-cells protein 9 (319 aa).

The signal sequence occupies residues 1–26 (MESSASCLPGFFMSFLLLQNTVLTQA). The Ig-like V-type domain occupies 27 to 117 (MRSDIKINIQ…TNQEKKRSIV (91 aa)). Residues 27–139 (MRSDIKINIQ…LMSNKFSCPS (113 aa)) are Extracellular-facing. Cys47 and Cys101 are oxidised to a cystine. The N-linked (GlcNAc...) asparagine glycan is linked to Asn105. A helical transmembrane segment spans residues 140-160 (IYLITIIFLNFLRGILVFCCL). Residues 161–183 (RRKPVCFRNLMSTVMEALYSKMG) are Cytoplasmic-facing. Residues 184–204 (VCCLLIWECLLLVLYIAFLPI) traverse the membrane as a helical segment. The Extracellular portion of the chain corresponds to 205 to 228 (YVSFRSRAFLLDDTYPLYTNWLWN). Residues 229-249 (ICIILTVIMVLFPGLILCLLW) traverse the membrane as a helical segment. Residues 250 to 319 (TLNCYGQVSS…DDTASTLFIS (70 aa)) lie on the Cytoplasmic side of the membrane.

It belongs to the SKINT family. Expressed in skin, thymus and testis.

The protein localises to the membrane. Its function is as follows. May act by engaging a cell surface molecule on immature T-cells in the embryonic thymus. This chain is Selection and upkeep of intraepithelial T-cells protein 9 (Skint9), found in Mus musculus (Mouse).